We begin with the raw amino-acid sequence, 476 residues long: H2.0-like homeobox protein (476 aa).

Disordered regions lie at residues 121 to 170, 328 to 401, and 413 to 476; these read HLPQ…SSKD, WRHS…HQTT, and TASS…LAGL. Residues 158-168 show a composition bias toward low complexity; sequence HHSGSAPAPSS. Positions 273-332 form a DNA-binding region, homeobox; the sequence is RSWSRAVFSNLQRKGLEKRFEIQKYVTKPDRKQLAAMLGLTDAQVKVWFQNRRMKWRHSK. Basic and acidic residues-rich tracts occupy residues 331–346 and 355–368; these read SKEAQAQKDKDKEAGE and EGEREERSPSRSEG. A compositionally biased stretch (acidic residues) spans 369–379; it reads EAESESSDSES. Residues 386-397 show a composition bias toward basic and acidic residues; that stretch reads DTERTEGTERSL. The segment covering 413 to 446 has biased composition (low complexity); it reads TASSSASGSSFSFSSSSSLGSSNGSAGSASSLGS. Positions 455 to 464 are enriched in polar residues; the sequence is HQPSVTSGPQ.

The protein belongs to the H2.0 homeobox family.

Its subcellular location is the nucleus. In terms of biological role, transcription factor required for TBX21/T-bet-dependent maturation of Th1 cells as well as maintenance of Th1-specific gene expression. Involved in embryogenesis and hematopoiesis. In Rattus norvegicus (Rat), this protein is H2.0-like homeobox protein (Hlx).